A 44-amino-acid chain; its full sequence is Photosystem II reaction center protein K (44 aa).

Residues Met-1–Ala-7 constitute a propeptide that is removed on maturation. The helical transmembrane segment at Phe-23–Phe-43 threads the bilayer.

This sequence belongs to the PsbK family. PSII is composed of 1 copy each of membrane proteins PsbA, PsbB, PsbC, PsbD, PsbE, PsbF, PsbH, PsbI, PsbJ, PsbK, PsbL, PsbM, PsbT, PsbX, PsbY, PsbZ, Psb30/Ycf12, at least 3 peripheral proteins of the oxygen-evolving complex and a large number of cofactors. It forms dimeric complexes.

The protein localises to the plastid. It is found in the chloroplast thylakoid membrane. One of the components of the core complex of photosystem II (PSII). PSII is a light-driven water:plastoquinone oxidoreductase that uses light energy to abstract electrons from H(2)O, generating O(2) and a proton gradient subsequently used for ATP formation. It consists of a core antenna complex that captures photons, and an electron transfer chain that converts photonic excitation into a charge separation. This is Photosystem II reaction center protein K from Thalassiosira pseudonana (Marine diatom).